We begin with the raw amino-acid sequence, 979 residues long: Chromosome partition protein Smc (979 aa).

33–40 (PNGSGKSN) serves as a coordination point for ATP. The stretch at 169 to 400 (SKYKLDKEEA…INILKQQFEN (232 aa)) forms a coiled coil. The region spanning 419 to 538 (DGYIGLASEL…DNVDNANRIA (120 aa)) is the SMC hinge domain. Coiled coils occupy residues 572-716 (ILNY…HSDS) and 750-818 (SLDL…DKII).

Belongs to the SMC family. As to quaternary structure, homodimer.

It is found in the cytoplasm. In terms of biological role, required for chromosome condensation and partitioning. This chain is Chromosome partition protein Smc, found in Mesomycoplasma hyorhinis (Mycoplasma hyorhinis).